Here is a 156-residue protein sequence, read N- to C-terminus: Ribosome maturation factor RimP (156 aa).

It belongs to the RimP family.

Its subcellular location is the cytoplasm. Functionally, required for maturation of 30S ribosomal subunits. The protein is Ribosome maturation factor RimP of Shouchella clausii (strain KSM-K16) (Alkalihalobacillus clausii).